Reading from the N-terminus, the 399-residue chain is MDTHAFKRSLHHSERYNRRGFGRAEEVAESLEQAYQSGLIGTIRDNGYKLSHGRLTVRLAEAFGFCWGVERAVAMAYETRKHYPAERLWITNEIIHNPSVNDHLREMDVQFIPVEQGVKDFSGVTSGDVVILPAFGATVQEMQLLNERGCHIVDTTCPWVSKVWTTVEKHKKHTITSIIHGKVKHEETLATSSFAGTYLVVLDMEEAQIVADYILGKGDRDAFMQRFSAACSPGFDPDRDLSRLGVANQTTMLKSETEEIGRLFERTMLSKYGPAELNDHFVAFNTICDATQERQDAMFSLVDEPLDLMVVIGGFNSSNTTHLQEIALSRGIRSFHIDTPDRLDAQANAIEHKPLNENLRLESNFLPAGPVTVGITSGASTPDRAVEEVIEKLMLLSES.

Residue C66 participates in [4Fe-4S] cluster binding. A (2E)-4-hydroxy-3-methylbut-2-enyl diphosphate-binding site is contributed by H96. H96 serves as a coordination point for dimethylallyl diphosphate. H96 lines the isopentenyl diphosphate pocket. Residue C157 participates in [4Fe-4S] cluster binding. H185 contacts (2E)-4-hydroxy-3-methylbut-2-enyl diphosphate. H185 is a dimethylallyl diphosphate binding site. H185 provides a ligand contact to isopentenyl diphosphate. Catalysis depends on E187, which acts as the Proton donor. T250 is a binding site for (2E)-4-hydroxy-3-methylbut-2-enyl diphosphate. [4Fe-4S] cluster is bound at residue C288. Residues S317, S318, N319, and S380 each coordinate (2E)-4-hydroxy-3-methylbut-2-enyl diphosphate. Residues S317, S318, N319, and S380 each coordinate dimethylallyl diphosphate. Isopentenyl diphosphate is bound by residues S317, S318, N319, and S380.

Belongs to the IspH family. It depends on [4Fe-4S] cluster as a cofactor.

It carries out the reaction isopentenyl diphosphate + 2 oxidized [2Fe-2S]-[ferredoxin] + H2O = (2E)-4-hydroxy-3-methylbut-2-enyl diphosphate + 2 reduced [2Fe-2S]-[ferredoxin] + 2 H(+). The catalysed reaction is dimethylallyl diphosphate + 2 oxidized [2Fe-2S]-[ferredoxin] + H2O = (2E)-4-hydroxy-3-methylbut-2-enyl diphosphate + 2 reduced [2Fe-2S]-[ferredoxin] + 2 H(+). It participates in isoprenoid biosynthesis; dimethylallyl diphosphate biosynthesis; dimethylallyl diphosphate from (2E)-4-hydroxy-3-methylbutenyl diphosphate: step 1/1. The protein operates within isoprenoid biosynthesis; isopentenyl diphosphate biosynthesis via DXP pathway; isopentenyl diphosphate from 1-deoxy-D-xylulose 5-phosphate: step 6/6. In terms of biological role, catalyzes the conversion of 1-hydroxy-2-methyl-2-(E)-butenyl 4-diphosphate (HMBPP) into a mixture of isopentenyl diphosphate (IPP) and dimethylallyl diphosphate (DMAPP). Acts in the terminal step of the DOXP/MEP pathway for isoprenoid precursor biosynthesis. This is 4-hydroxy-3-methylbut-2-enyl diphosphate reductase from Parasynechococcus marenigrum (strain WH8102).